The following is a 474-amino-acid chain: E3 ubiquitin-protein ligase CBL-C (474 aa).

The tract at residues 7 to 145 is 4H; the sequence is PWGRQWEEAR…HALFPGGKYC (139 aa). The Cbl-PTB domain maps to 7-321; it reads PWGRQWEEAR…GKTHNPDLTE (315 aa). Positions 146–218 are EF-hand-like; sequence GHMYQLTKAP…FEFDVFTRLF (73 aa). 3 residues coordinate Ca(2+): aspartate 199, threonine 201, and glutamate 210. An SH2-like region spans residues 219–321; that stretch reads QPWPTLLKNW…GKTHNPDLTE (103 aa). Arginine 264 is a binding site for 4-O-phospho-L-tyrosine. Positions 322 to 350 are linker; that stretch reads LGQAEPQQRIHVSEEQLQLYWAMDSTFEL. Position 341 is a phosphotyrosine; by SRC (tyrosine 341). The RING-type zinc finger occupies 351-390; the sequence is CKICAESNKDVKIEPCGHLLCSCCLAAWQHSDSQTCPFCR. Positions 351–474 are interaction with RET; it reads CKICAESNKD…ALGPQDPAPA (124 aa). Positions 409 to 474 are disordered; the sequence is TAEDSGNSSD…ALGPQDPAPA (66 aa). A compositionally biased stretch (pro residues) spans 432-441; sequence SAPPLPPRPD.

As to quaternary structure, interacts with ubiquitin-conjugating enzyme E2 UBE2D2 and UBE2D3. Isoform 1 interacts with EGFR (tyrosine phosphorylated). Interacts with the SH3 domain proteins LYN and CRK. Interacts (via RING-type zinc finger) with TGFB1I1 (via LIM zinc-binding domain 2); the interaction is direct and enhances the E3 activity. Interacts directly with RET (inactive) and CD2AP; dissociates from RET upon RET activation by GDNF which also increases the interaction with CD2AP suggesting dissociation as CBLC:CD2AP complex. Interacts with SRC; the interaction is enhanced when SRC is phosphorylated at 'Tyr-419'. Phosphorylated on multiple tyrosine residues by SRC. Isoform 1, but not isoform 2, is phosphorylated on tyrosines by EGFR. In terms of processing, autoubiquitinated when phosphorylated at Tyr-341, enhanced by SRC; suggesting proteasomal degradation. Ubiquitous.

It catalyses the reaction S-ubiquitinyl-[E2 ubiquitin-conjugating enzyme]-L-cysteine + [acceptor protein]-L-lysine = [E2 ubiquitin-conjugating enzyme]-L-cysteine + N(6)-ubiquitinyl-[acceptor protein]-L-lysine.. With respect to regulation, phosphorylation at Tyr-341 is necessary and sufficient for the activation of E3 activity. Acts as an E3 ubiquitin-protein ligase, which accepts ubiquitin from specific E2 ubiquitin-conjugating enzymes, and then transfers it to substrates promoting their degradation by the proteasome. Functionally coupled with the E2 ubiquitin-protein ligases UB2D1, UB2D2 and UB2D3. Regulator of EGFR mediated signal transduction; upon EGF activation, ubiquitinates EGFR. Isoform 1, but not isoform 2, inhibits EGF stimulated MAPK1 activation. Promotes ubiquitination of SRC phosphorylated at 'Tyr-419'. In collaboration with CD2AP may act as regulatory checkpoint for Ret signaling by modulating the rate of RET degradation after ligand activation; CD2AP converts it from an inhibitor to a promoter of RET degradation; the function limits the potency of GDNF on neuronal survival. The protein is E3 ubiquitin-protein ligase CBL-C (CBLC) of Homo sapiens (Human).